The following is a 120-amino-acid chain: NAD(P)H-quinone oxidoreductase subunit 3, chloroplastic (120 aa).

Helical transmembrane passes span 7-27, 64-84, and 88-108; these read YETF…AFLI, MFAL…PWAM, and ILGI…IVGS.

The protein belongs to the complex I subunit 3 family. As to quaternary structure, NDH is composed of at least 16 different subunits, 5 of which are encoded in the nucleus.

It localises to the plastid. It is found in the chloroplast thylakoid membrane. It carries out the reaction a plastoquinone + NADH + (n+1) H(+)(in) = a plastoquinol + NAD(+) + n H(+)(out). The catalysed reaction is a plastoquinone + NADPH + (n+1) H(+)(in) = a plastoquinol + NADP(+) + n H(+)(out). Functionally, NDH shuttles electrons from NAD(P)H:plastoquinone, via FMN and iron-sulfur (Fe-S) centers, to quinones in the photosynthetic chain and possibly in a chloroplast respiratory chain. The immediate electron acceptor for the enzyme in this species is believed to be plastoquinone. Couples the redox reaction to proton translocation, and thus conserves the redox energy in a proton gradient. This Cycas taitungensis (Prince sago) protein is NAD(P)H-quinone oxidoreductase subunit 3, chloroplastic.